We begin with the raw amino-acid sequence, 248 residues long: Putative eukaryotic initiation factor 4A-like protein (248 aa).

The short motif at 14–42 is the Q motif element; it reads VGFASLGLNEQLINNIKRYGITKLTPFQM. Positions 45–239 constitute a Helicase ATP-binding domain; that stretch reads IKEIKENSNV…NTFIKIPKII (195 aa). 58–65 is an ATP binding site; sequence SIEGTGRT. The DEAD box motif lies at 185–188; sequence DELD.

It belongs to the DEAD box helicase family. eIF4A subfamily.

In Dictyostelium discoideum (Social amoeba), this protein is Putative eukaryotic initiation factor 4A-like protein.